The primary structure comprises 200 residues: MPVGRREQIVDCRSVMGLGEGGGLAQRGTFAEALKNDVVVVAMSPGRRHITKPVCEITYGIREAGIQTSVLVLNAGSGIPHDAPRGALGSTFGIKPEEAEQINRHKLCVVHFGNVISHIVYKAGLLLKYVEIPTIIVCQAPVDMEDLAKYGIKTRDVMPLEPKTKGTVVDIVTGVIRGESCPQTKIDEVIRKIKLHLNLN.

In terms of assembly, MCR is composed of three subunits: alpha, beta, and gamma. The function of proteins C and D is not known.

In Methanocaldococcus jannaschii (strain ATCC 43067 / DSM 2661 / JAL-1 / JCM 10045 / NBRC 100440) (Methanococcus jannaschii), this protein is Methyl-coenzyme M reductase I operon protein C (mcrC).